The sequence spans 175 residues: Interferon a3 (175 aa).

The N-terminal stretch at 1 to 23 (MYTMQSWSCIFLIICSMQSVCHC) is a signal peptide. Cys24 and Cys120 are oxidised to a cystine.

This sequence belongs to the alpha/beta interferon family. In terms of tissue distribution, isoform 1 and isoform 2 are expressed in several tissues, including gill, spleen, intestine, kidney and skin.

It localises to the secreted. The protein resides in the cytoplasm. Its subcellular location is the cytosol. Functionally, key player in antiviral response. Induces expression of TLRs, including that of TLR3, TLR9 and TLR8a1, and that of cytosolic pattern recognition receptors, including RIGI, IFIH1/MDA5 and DHX58/LGP2. Also induces MX1 and its own expression. In the presence of intracellular IFNAR2 (iIFNAR2) and IFNAR1B, intracellular isoform 3 may mediate STAT1 and STAT2 phosphorylation and induction of EIF2AK2, MX1 and RSAD2. In Oncorhynchus mykiss (Rainbow trout), this protein is Interferon a3.